The primary structure comprises 502 residues: C2H2-type transcription factor MSN2 (502 aa).

2 consecutive C2H2-type zinc fingers follow at residues 385-408 and 414-436; these read FVCHLCTRRFRRQEHLKRHFRSLH and FACGECGKKFSRSDNLTQHSRIH.

The protein resides in the nucleus. Its function is as follows. Key downstream transcription factor in the HOG1-MAPK pathway. Plays crucial roles in the regulation of growth, conidiation, trap development and fatty acid metabolism. Negatively regulates secondary metabolism such as arthrobotrisins biosynthesis.Also regulates autophagy and endocytosis. In Arthrobotrys oligospora (strain ATCC 24927 / CBS 115.81 / DSM 1491) (Nematode-trapping fungus), this protein is C2H2-type transcription factor MSN2.